The primary structure comprises 422 residues: MPAGRRGPAAQSARRPPPLLPLLLLLCVLGAPRAGSGAHTAVISPQDPTLLIGSSLLATCSVHGDPPGATAEGLYWTLNGRRLPPELSRVLNASTLALALANLNGSRQRSGDNLVCHARDGSILAGSCLYVGLPPEKPVNISCWSKNMKDLTCRWTPGAHGETFLHTNYSLKYKLRWYGQDNTCEEYHTVGPHSCHIPKDLALFTPYEIWVEATNRLGSARSDVLTLDILDVVTTDPPPDVHVSRVGGLEDQLSVRWVSPPALKDFLFQAKYQIRYRVEDSVDWKVVDDVSNQTSCRLAGLKPGTVYFVQVRCNPFGIYGSKKAGIWSEWSHPTAASTPRSERPGPGGGACEPRGGEPSSGPVRRELKQFLGWLKKHAYCSNLSFRLYDQWRAWMQKSHKTRNQDEGILPSGRRGTARGPAR.

The N-terminal stretch at 1–37 (MPAGRRGPAAQSARRPPPLLPLLLLLCVLGAPRAGSG) is a signal peptide. The Ig-like C2-type domain occupies 38–131 (AHTAVISPQD…SILAGSCLYV (94 aa)). N-linked (GlcNAc...) asparagine glycans are attached at residues N92, N104, and N140. 2 consecutive Fibronectin type-III domains span residues 137 to 232 (KPVN…ILDV) and 237 to 341 (PPPD…TPRS). C143 and C153 are oxidised to a cystine. N168 is a glycosylation site (N-linked (GlcNAc...) asparagine). A disulfide bridge links C184 with C195. At S219 the chain carries Phosphoserine. N292 carries N-linked (GlcNAc...) asparagine glycosylation. The short motif at 327-331 (WSEWS) is the WSXWS motif element. The segment at 332 to 363 (HPTAASTPRSERPGPGGGACEPRGGEPSSGPV) is disordered. N-linked (GlcNAc...) asparagine glycosylation occurs at N382. Residues 399 to 422 (HKTRNQDEGILPSGRRGTARGPAR) are disordered.

It belongs to the type I cytokine receptor family. Type 3 subfamily. Forms covalent di- and tetramers. Forms a heteromeric complex with cardiotrophin-like cytokine CLCF1/CLC; the CRLF1-CLCF1 complex is a ligand for the ciliary neurotrophic factor receptor/CNTFR. The CRLF1-CLCF1 heterodimer binds SORL1 (via N-terminal ectodomain); within this complex, the interaction is mediated predominantly by the CRLF1 moiety. The tripartite signaling complex formed by CRLF1, CLCF1 and CNTFR also binds SORL1. In terms of tissue distribution, highest levels of expression observed in spleen, thymus, lymph node, appendix, bone marrow, stomach, placenta, heart, thyroid and ovary. Strongly expressed also in fetal lung.

It is found in the secreted. In complex with CLCF1, forms a heterodimeric neurotropic cytokine that plays a crucial role during neuronal development. May also play a regulatory role in the immune system. The polypeptide is Cytokine receptor-like factor 1 (CRLF1) (Homo sapiens (Human)).